Reading from the N-terminus, the 403-residue chain is Stearoyl-[acyl-carrier-protein] 9-desaturase 4, chloroplastic (403 aa).

The transit peptide at 1-44 (MALLLNSTMTVAMKQNPATAVSFMQTTCLGSSFSPPRHLQVSCV) directs the protein to the chloroplast. Residues Glu-140, Glu-178, His-181, Glu-231, Glu-264, and His-267 each contribute to the Fe cation site.

Belongs to the fatty acid desaturase type 2 family. As to quaternary structure, homodimer. Requires Fe(2+) as cofactor. In terms of tissue distribution, preferentially expressed in roots.

Its subcellular location is the plastid. It is found in the chloroplast. The enzyme catalyses octadecanoyl-[ACP] + 2 reduced [2Fe-2S]-[ferredoxin] + O2 + 2 H(+) = (9Z)-octadecenoyl-[ACP] + 2 oxidized [2Fe-2S]-[ferredoxin] + 2 H2O. It participates in lipid metabolism; fatty acid metabolism. In terms of biological role, converts stearoyl-ACP to oleoyl-ACP by introduction of a cis double bond between carbons 9 and 10 of the acyl chain. In Arabidopsis thaliana (Mouse-ear cress), this protein is Stearoyl-[acyl-carrier-protein] 9-desaturase 4, chloroplastic (S-ACP-DES4).